We begin with the raw amino-acid sequence, 473 residues long: Glutamate--tRNA ligase (473 aa).

A 'HIGH' region motif is present at residues 11–21 (PSPTGFLHIGG). The short motif at 240-244 (KLSKR) is the 'KMSKS' region element. An ATP-binding site is contributed by K243.

Belongs to the class-I aminoacyl-tRNA synthetase family. Glutamate--tRNA ligase type 1 subfamily. As to quaternary structure, monomer.

The protein resides in the cytoplasm. It catalyses the reaction tRNA(Glu) + L-glutamate + ATP = L-glutamyl-tRNA(Glu) + AMP + diphosphate. Its function is as follows. Catalyzes the attachment of glutamate to tRNA(Glu) in a two-step reaction: glutamate is first activated by ATP to form Glu-AMP and then transferred to the acceptor end of tRNA(Glu). The polypeptide is Glutamate--tRNA ligase (Rhodopseudomonas palustris (strain BisB5)).